The following is a 180-amino-acid chain: Large ribosomal subunit protein uL5c (180 aa).

This sequence belongs to the universal ribosomal protein uL5 family. As to quaternary structure, part of the 50S ribosomal subunit; contacts the 5S rRNA.

Its subcellular location is the plastid. It is found in the chloroplast. Functionally, binds 5S rRNA, forms part of the central protuberance of the 50S subunit. In Tupiella akineta (Green alga), this protein is Large ribosomal subunit protein uL5c (rpl5).